The chain runs to 313 residues: Transaldolase (313 aa).

Lysine 125 serves as the catalytic Schiff-base intermediate with substrate.

The protein belongs to the transaldolase family. Type 1 subfamily. In terms of assembly, homodimer.

The protein localises to the cytoplasm. It carries out the reaction D-sedoheptulose 7-phosphate + D-glyceraldehyde 3-phosphate = D-erythrose 4-phosphate + beta-D-fructose 6-phosphate. It participates in carbohydrate degradation; pentose phosphate pathway; D-glyceraldehyde 3-phosphate and beta-D-fructose 6-phosphate from D-ribose 5-phosphate and D-xylulose 5-phosphate (non-oxidative stage): step 2/3. Transaldolase is important for the balance of metabolites in the pentose-phosphate pathway. In Pseudomonas syringae pv. syringae (strain B728a), this protein is Transaldolase.